The following is a 145-amino-acid chain: Large ribosomal subunit protein uL13 (145 aa).

This sequence belongs to the universal ribosomal protein uL13 family. Part of the 50S ribosomal subunit.

In terms of biological role, this protein is one of the early assembly proteins of the 50S ribosomal subunit, although it is not seen to bind rRNA by itself. It is important during the early stages of 50S assembly. The sequence is that of Large ribosomal subunit protein uL13 from Bacillus cereus (strain ZK / E33L).